The sequence spans 355 residues: UDP-N-acetylglucosamine--N-acetylmuramyl-(pentapeptide) pyrophosphoryl-undecaprenol N-acetylglucosamine transferase (355 aa).

Residues Thr15–Gly17, Asn127, Arg163, Ser191, Ile244, Ala263–Glu268, and Gln288 contribute to the UDP-N-acetyl-alpha-D-glucosamine site.

This sequence belongs to the glycosyltransferase 28 family. MurG subfamily.

It is found in the cell inner membrane. The catalysed reaction is di-trans,octa-cis-undecaprenyl diphospho-N-acetyl-alpha-D-muramoyl-L-alanyl-D-glutamyl-meso-2,6-diaminopimeloyl-D-alanyl-D-alanine + UDP-N-acetyl-alpha-D-glucosamine = di-trans,octa-cis-undecaprenyl diphospho-[N-acetyl-alpha-D-glucosaminyl-(1-&gt;4)]-N-acetyl-alpha-D-muramoyl-L-alanyl-D-glutamyl-meso-2,6-diaminopimeloyl-D-alanyl-D-alanine + UDP + H(+). Its pathway is cell wall biogenesis; peptidoglycan biosynthesis. Cell wall formation. Catalyzes the transfer of a GlcNAc subunit on undecaprenyl-pyrophosphoryl-MurNAc-pentapeptide (lipid intermediate I) to form undecaprenyl-pyrophosphoryl-MurNAc-(pentapeptide)GlcNAc (lipid intermediate II). The polypeptide is UDP-N-acetylglucosamine--N-acetylmuramyl-(pentapeptide) pyrophosphoryl-undecaprenol N-acetylglucosamine transferase (Shigella boydii serotype 18 (strain CDC 3083-94 / BS512)).